The primary structure comprises 169 residues: Ribosome maturation factor RimM (169 aa).

The PRC barrel domain occupies 97-169 (PGEYYWYQLI…VITVDWDMNF (73 aa)).

This sequence belongs to the RimM family. As to quaternary structure, binds ribosomal protein uS19.

Its subcellular location is the cytoplasm. In terms of biological role, an accessory protein needed during the final step in the assembly of 30S ribosomal subunit, possibly for assembly of the head region. Essential for efficient processing of 16S rRNA. May be needed both before and after RbfA during the maturation of 16S rRNA. It has affinity for free ribosomal 30S subunits but not for 70S ribosomes. In Legionella pneumophila subsp. pneumophila (strain Philadelphia 1 / ATCC 33152 / DSM 7513), this protein is Ribosome maturation factor RimM.